The following is a 455-amino-acid chain: L-serine dehydratase (455 aa).

It belongs to the iron-sulfur dependent L-serine dehydratase family. It depends on [4Fe-4S] cluster as a cofactor.

The catalysed reaction is L-serine = pyruvate + NH4(+). It functions in the pathway carbohydrate biosynthesis; gluconeogenesis. The protein is L-serine dehydratase (sdaA) of Helicobacter pylori (strain J99 / ATCC 700824) (Campylobacter pylori J99).